The following is a 177-amino-acid chain: Anti-apoptotic protein NR13 (177 aa).

The BH1 signature appears at 75–94 (LEAEGGLNWGRLLALVVFTG). A helical transmembrane segment spans residues 86–106 (LLALVVFTGTLAAALAESGCE). Residues 126–141 (EWLEEHGGWDGFCRFF) carry the BH2 motif. Residues 156–176 (SNAIMAAAGFGIAGLAFLLVV) form a helical membrane-spanning segment.

The protein belongs to the Bcl-2 family. In terms of assembly, interacts with BAX. As to expression, expressed preferentially in heart, skeletal muscle, retina, optical tectum and bursa of Fabricius.

It localises to the cell membrane. Shows anti-apoptotic properties. Counteract the pro-apoptotic activity of BAX. The chain is Anti-apoptotic protein NR13 (NR13) from Gallus gallus (Chicken).